Reading from the N-terminus, the 541-residue chain is Membrane protein insertase YidC (541 aa).

Helical transmembrane passes span 6–26 (NILL…WQAD), 325–345 (LVVD…LLMF), 349–369 (FVGN…GLLF), 420–440 (GGCL…WVLL), 457–477 (LSVQ…MFIM), and 500–520 (VIFT…WLVG).

The protein belongs to the OXA1/ALB3/YidC family. Type 1 subfamily. In terms of assembly, interacts with the Sec translocase complex via SecD. Specifically interacts with transmembrane segments of nascent integral membrane proteins during membrane integration.

It localises to the cell inner membrane. Required for the insertion and/or proper folding and/or complex formation of integral membrane proteins into the membrane. Involved in integration of membrane proteins that insert both dependently and independently of the Sec translocase complex, as well as at least some lipoproteins. Aids folding of multispanning membrane proteins. The sequence is that of Membrane protein insertase YidC from Shewanella sp. (strain W3-18-1).